Reading from the N-terminus, the 98-residue chain is ESAT-6-like protein EsxM (98 aa).

This sequence belongs to the WXG100 family. CFP-10 subfamily.

The protein resides in the secreted. In terms of biological role, alters the host macrophage cytoskeleton and enhances macrophage motility. Promotes granuloma efflux, extrapulmonary dissemination of infection and bone disease. The polypeptide is ESAT-6-like protein EsxM (Mycobacterium marinum (strain ATCC BAA-535 / M)).